Here is an 825-residue protein sequence, read N- to C-terminus: Breast cancer anti-estrogen resistance protein 3 homolog (825 aa).

A2 is modified (N-acetylalanine). Residues 31 to 93 form a disordered region; the sequence is KSPLTEHRPD…PVTQDSIQES (63 aa). Phosphoserine occurs at positions 32, 78, 83, 182, and 290. Residues 75–93 are compositionally biased toward polar residues; the sequence is HSKSPQQNSPVTQDSIQES. The 100-residue stretch at 154–253 folds into the SH2 domain; it reads WYHGRIPRQV…QSGAIIFQPI (100 aa). N6-methyllysine is present on K334. Phosphoserine occurs at positions 358, 363, and 375. An Omega-N-methylarginine modification is found at R442. The residue at position 471 (S471) is a Phosphoserine. The Ras-GEF domain occupies 548–818; sequence DPKVIAQHIL…TALSRKLEPP (271 aa). Residues 744–748 form a mediates the interaction with BCAR1/p130CAS region; that stretch reads LATAR.

As to quaternary structure, part of a complex comprised of PTPRA, BCAR1, BCAR3 (via SH2 domain) and SRC; the formation of the complex is dependent on integrin mediated-tyrosine phosphorylation of PTPRA. Within the complex, interacts (via SH2 domain) with PTPRA (when phosphorylated on 'Tyr-798'). Interacts (via Ras-GEF domain) with BCAR1. Interacts (via Ras-GEF domain) with NEDD9. Interacts with PTK2/FAK1. Interacts with PTPN1. Interacts (via SH2 domain) with EGFR (when tyrosine-phosphorylated). Phosphorylated on tyrosine residues.

It localises to the cytoplasm. The protein localises to the cell junction. Its subcellular location is the focal adhesion. Functionally, acts as an adapter protein downstream of several growth factor receptors to promote cell proliferation, migration, and redistribution of actin fibers. Specifically involved in INS/insulin signaling pathway by mediating MAPK1/ERK2-MAPK3/ERK1 activation and DNA synthesis. Promotes insulin-mediated membrane ruffling. In response to vasoconstrictor peptide EDN1, involved in the activation of RAP1 downstream of PTK2B via interaction with phosphorylated BCAR1. Inhibits cell migration and invasion via regulation of TGFB-mediated matrix digestion, actin filament rearrangement, and inhibition of invadopodia activity. May inhibit TGFB-SMAD signaling, via facilitating BCAR1 and SMAD2 and/or SMAD3 interaction. Regulates EGF-induced DNA synthesis. Required for the maintenance of ocular lens morphology and structural integrity, potentially via regulation of focal adhesion complex signaling. Acts upstream of PTPRA to regulate the localization of BCAR1 and PTPRA to focal adhesions, via regulation of SRC-mediated phosphorylation of PTPRA. Positively regulates integrin-induced tyrosine phosphorylation of BCAR1. Acts as a guanine nucleotide exchange factor (GEF) for small GTPases RALA, RAP1A and RRAS. However, in a contrasting study, lacks GEF activity towards RAP1. This Macaca fascicularis (Crab-eating macaque) protein is Breast cancer anti-estrogen resistance protein 3 homolog (BCAR3).